We begin with the raw amino-acid sequence, 275 residues long: 2,3,4,5-tetrahydropyridine-2,6-dicarboxylate N-succinyltransferase (275 aa).

2 residues coordinate substrate: R104 and D141.

Belongs to the transferase hexapeptide repeat family. As to quaternary structure, homotrimer.

The protein localises to the cytoplasm. It catalyses the reaction (S)-2,3,4,5-tetrahydrodipicolinate + succinyl-CoA + H2O = (S)-2-succinylamino-6-oxoheptanedioate + CoA. Its pathway is amino-acid biosynthesis; L-lysine biosynthesis via DAP pathway; LL-2,6-diaminopimelate from (S)-tetrahydrodipicolinate (succinylase route): step 1/3. This is 2,3,4,5-tetrahydropyridine-2,6-dicarboxylate N-succinyltransferase from Haemophilus influenzae (strain PittEE).